The chain runs to 380 residues: 1-deoxy-D-xylulose 5-phosphate reductoisomerase (380 aa).

NADPH is bound by residues Ser-10, Gly-11, Ser-12, Ile-13, Gly-36, Lys-37, Asn-38, and Asn-120. Residue Lys-121 participates in 1-deoxy-D-xylulose 5-phosphate binding. NADPH is bound at residue Glu-122. Asp-146 contributes to the Mn(2+) binding site. 1-deoxy-D-xylulose 5-phosphate is bound by residues Ser-147, Glu-148, Ser-172, and His-195. Glu-148 contacts Mn(2+). Gly-201 is an NADPH binding site. 1-deoxy-D-xylulose 5-phosphate contacts are provided by Ser-208, Asn-213, Lys-214, and Glu-217. Glu-217 contacts Mn(2+).

The protein belongs to the DXR family. It depends on Mg(2+) as a cofactor. The cofactor is Mn(2+).

The enzyme catalyses 2-C-methyl-D-erythritol 4-phosphate + NADP(+) = 1-deoxy-D-xylulose 5-phosphate + NADPH + H(+). Its pathway is isoprenoid biosynthesis; isopentenyl diphosphate biosynthesis via DXP pathway; isopentenyl diphosphate from 1-deoxy-D-xylulose 5-phosphate: step 1/6. In terms of biological role, catalyzes the NADPH-dependent rearrangement and reduction of 1-deoxy-D-xylulose-5-phosphate (DXP) to 2-C-methyl-D-erythritol 4-phosphate (MEP). This chain is 1-deoxy-D-xylulose 5-phosphate reductoisomerase, found in Bacillus cereus (strain Q1).